The primary structure comprises 97 residues: M-zodatoxin-Lt7a (97 aa).

The signal sequence occupies residues 1 to 22 (MKFYVVALALLVAFVCIAESRS). Positions 23–63 (VETERAVDADLEDDLDDLEEYLEGIAEALELEDFPDTEEAR) are excised as a propeptide. The Processing quadruplet motif signature appears at 60–63 (EEAR).

In terms of processing, cleavage of the propeptide depends on the processing quadruplet motif (XXXR, with at least one of X being E). In terms of tissue distribution, expressed by the venom gland.

The protein localises to the secreted. In terms of biological role, does not have antimicrobial or antifungal activity. Does not have hemolytic activity against rabbit erythrocytes. However, it causes some conductance changes in planar bilayer membranes, without membrane rupture, suggesting a cytolytic function on other biological targets. It causes paralysis, but is not lethal when injected into insect (M.domestica) larvae. This Lachesana tarabaevi (Spider) protein is M-zodatoxin-Lt7a.